The sequence spans 56 residues: Potassium channel toxin alpha-KTx 9.1 (56 aa).

A signal peptide spans 1-28 (MSRLFTLVLIVLAMNVMMAIISDPVVEA). 3 disulfides stabilise this stretch: Cys31/Cys47, Cys34/Cys52, and Cys38/Cys54.

Expressed by the venom gland.

It is found in the secreted. Its function is as follows. Blocks small conductance calcium-activated potassium channels (KCNN, SK). Weakly inhibits the Kv7.1/KCNQ1 channel (10 uM of the toxin inhibits currents by 23.3%). Low toxicity by intracerebroventricular injection into mice. The chain is Potassium channel toxin alpha-KTx 9.1 from Olivierus martensii (Manchurian scorpion).